The following is a 1344-amino-acid chain: Protein stu1 (1344 aa).

An HEAT 1 repeat occupies Leu-93–Val-131. Residues His-265 to Met-292 form a disordered region. The HEAT 2 repeat unit spans residues Val-508–Gln-544. 5 disordered regions span residues Arg-606–Thr-637, Ala-651–Arg-847, Leu-914–Pro-945, Pro-984–Ser-1004, and Ser-1031–Arg-1054. Polar residues-rich tracts occupy residues Val-691–Ser-705 and Ala-735–Asp-747. Residues Gly-748–Gly-769 show a composition bias toward low complexity. Composition is skewed to polar residues over residues Phe-828 to Arg-847 and Leu-914 to Glu-942. Residues Ser-995 to Ser-1004 are compositionally biased toward low complexity.

The protein belongs to the CLASP family. Interacts with microtubules.

Its subcellular location is the cytoplasm. It localises to the cytoskeleton. The protein resides in the nucleus. It is found in the spindle. Functionally, microtubule binding protein that promotes the stabilization of dynamic microtubules. Required for mitotic spindle formation. This is Protein stu1 (stu1) from Aspergillus fumigatus (strain ATCC MYA-4609 / CBS 101355 / FGSC A1100 / Af293) (Neosartorya fumigata).